The sequence spans 158 residues: MIDDNGYRLNVGIVLCNTYGQVLWAKRYKQCSWQFPQGGINIGETPEQAMYRELFEEIGLNYCDVRILSITRCWFCYKLPTQLVRWRIKPLCLGQKQKWFLLKLLSKDTKINMKTSKVCTFDTWQWVSLWYPIRQVVFFKRHVYRKVMKEFVKLIISR.

Residues 6-149 enclose the Nudix hydrolase domain; that stretch reads GYRLNVGIVL…KRHVYRKVMK (144 aa). The short motif at 38–59 is the Nudix box element; the sequence is GGINIGETPEQAMYRELFEEIG.

This sequence belongs to the Nudix hydrolase family. RppH subfamily. Requires a divalent metal cation as cofactor.

Accelerates the degradation of transcripts by removing pyrophosphate from the 5'-end of triphosphorylated RNA, leading to a more labile monophosphorylated state that can stimulate subsequent ribonuclease cleavage. This chain is RNA pyrophosphohydrolase, found in Blochmanniella floridana.